The primary structure comprises 143 residues: Ribonuclease P protein component (143 aa).

The disordered stretch occupies residues 111 to 143 (RVKRKGGGPGGNRRSAPPGSAPLTDDGRLRGEP).

This sequence belongs to the RnpA family. In terms of assembly, consists of a catalytic RNA component (M1 or rnpB) and a protein subunit.

The enzyme catalyses Endonucleolytic cleavage of RNA, removing 5'-extranucleotides from tRNA precursor.. Its function is as follows. RNaseP catalyzes the removal of the 5'-leader sequence from pre-tRNA to produce the mature 5'-terminus. It can also cleave other RNA substrates such as 4.5S RNA. The protein component plays an auxiliary but essential role in vivo by binding to the 5'-leader sequence and broadening the substrate specificity of the ribozyme. This is Ribonuclease P protein component from Deinococcus geothermalis (strain DSM 11300 / CIP 105573 / AG-3a).